The sequence spans 537 residues: MDCRVTHFKEKDSFISKLKESDKSLLEFYQYNPVETASFTTKMKRPNNGREKQLAQIIKDYMADLKLTTSQLEHIEALEQGAKVVIGGQQAGLFGGPLYTFHKILSIVTLSSQLTKEYGETVVPVFWIAGEDHDFDEVNHTYVYNAKEAQLKKVKYHTMTPPETNVSRYTPDKEAMLNALNLFFEELKETNHSKPLYKLCVDIINEFDTWTDIFKALLHAVFKEHGVLLIDAQNDKLRQLEKPLLKQIVTNHSKINQVFRQTQEQTIASGLTQMIQTDTNVHLFLHEDGMRQLISKEDNLFKLSKSDITYSEEELIELIETEPERFSNNVVTRPVMEEWLFNTVAFIGGPSEIKYWAELNNVFKLLNVEMPIVLPRMKMTYMMERTQKLLKQYSLNVEKVIQNGIDDDKNEFVREKASDTFIQQVEELKAKHENVYQQLLNEVKENQDNFNLVTKNEEIHNKQFDYLLKRYLLNIERENDISMRQFRELDLVLHPHHGLQERIWNPLQIMNDFGIDVFSPSTFPPLEYTFDQIIIKP.

A coiled-coil region spans residues 383–451 (MERTQKLLKQ…EVKENQDNFN (69 aa)).

This sequence belongs to the BshC family.

Functionally, involved in bacillithiol (BSH) biosynthesis. May catalyze the last step of the pathway, the addition of cysteine to glucosamine malate (GlcN-Mal) to generate BSH. The chain is Putative cysteine ligase BshC from Staphylococcus haemolyticus (strain JCSC1435).